The following is a 143-amino-acid chain: Large ribosomal subunit protein uL11 (143 aa).

The protein belongs to the universal ribosomal protein uL11 family. In terms of assembly, part of the ribosomal stalk of the 50S ribosomal subunit. Interacts with L10 and the large rRNA to form the base of the stalk. L10 forms an elongated spine to which L12 dimers bind in a sequential fashion forming a multimeric L10(L12)X complex. Post-translationally, one or more lysine residues are methylated.

Functionally, forms part of the ribosomal stalk which helps the ribosome interact with GTP-bound translation factors. This Zymomonas mobilis subsp. mobilis (strain ATCC 31821 / ZM4 / CP4) protein is Large ribosomal subunit protein uL11.